Reading from the N-terminus, the 345-residue chain is Phosphoribosylformylglycinamidine cyclo-ligase (345 aa).

It belongs to the AIR synthase family.

It localises to the cytoplasm. It carries out the reaction 2-formamido-N(1)-(5-O-phospho-beta-D-ribosyl)acetamidine + ATP = 5-amino-1-(5-phospho-beta-D-ribosyl)imidazole + ADP + phosphate + H(+). It participates in purine metabolism; IMP biosynthesis via de novo pathway; 5-amino-1-(5-phospho-D-ribosyl)imidazole from N(2)-formyl-N(1)-(5-phospho-D-ribosyl)glycinamide: step 2/2. The protein is Phosphoribosylformylglycinamidine cyclo-ligase of Escherichia coli O139:H28 (strain E24377A / ETEC).